We begin with the raw amino-acid sequence, 377 residues long: CaM kinase-like vesicle-associated protein (377 aa).

The region spanning 24–287 (YDLGQLIKTE…AADAISHEWI (264 aa)) is the Protein kinase domain. Residues 324–377 (MKRLRAPEQTDPGTPSPSKDSDKTPSMATPAPSPANTPAEGAPSLPCPSPDTTG) form a disordered region. The segment covering 347–362 (TPSMATPAPSPANTPA) has biased composition (low complexity). A compositionally biased stretch (pro residues) spans 368–377 (LPCPSPDTTG).

This sequence belongs to the protein kinase superfamily. CAMK Ser/Thr protein kinase family. In terms of assembly, interacts with calmodulin, in the presence of calcium. Ca(2+) serves as cofactor.

Its subcellular location is the cytoplasmic vesicle membrane. In terms of biological role, does not appear to have detectable kinase activity. This chain is CaM kinase-like vesicle-associated protein (camkv), found in Xenopus laevis (African clawed frog).